The chain runs to 432 residues: Glutamate-1-semialdehyde 2,1-aminomutase (432 aa).

Lys-272 is modified (N6-(pyridoxal phosphate)lysine).

Belongs to the class-III pyridoxal-phosphate-dependent aminotransferase family. HemL subfamily. As to quaternary structure, homodimer. The cofactor is pyridoxal 5'-phosphate.

The protein localises to the cytoplasm. The catalysed reaction is (S)-4-amino-5-oxopentanoate = 5-aminolevulinate. It functions in the pathway porphyrin-containing compound metabolism; protoporphyrin-IX biosynthesis; 5-aminolevulinate from L-glutamyl-tRNA(Glu): step 2/2. It participates in porphyrin-containing compound metabolism; chlorophyll biosynthesis. The protein is Glutamate-1-semialdehyde 2,1-aminomutase of Trichormus variabilis (strain ATCC 29413 / PCC 7937) (Anabaena variabilis).